The chain runs to 131 residues: uncharacterized protein (131 aa).

The signal sequence occupies residues 1 to 26 (MKKIVAAIVVIGLVFIAFFYLYSRSG).

This is an uncharacterized protein from Bacillus subtilis (strain 168).